The primary structure comprises 381 residues: Peptidoglycan transport system permease protein YejE (381 aa).

Helical transmembrane passes span 38-58, 183-203, 230-250, 292-312, and 347-367; these read YWSF…EFIA, VLFG…AGAI, ILLI…GIML, LLPN…SGSI, and WLGL…IFVG. Residues 179-371 enclose the ABC transmembrane type-1 domain; it reads FRISVLFGLT…LLIFVGEAVR (193 aa).

The protein belongs to the binding-protein-dependent transport system permease family. In terms of assembly, the complex is composed of one ATP-binding protein (YejF), two transmembrane proteins (YejB and YejE) and a solute-binding protein (YepA or YejA).

The protein resides in the cell inner membrane. Part of the ABC transporter complex YejBEF-YepA involved in the uptake of muropeptides, the breakdown products of cell wall peptidoglycan. The import of muropeptides into the cell enables peptidoglycan recycling, which is vital for cell wall integrity in this bacterium. Is also probably part of the ABC transporter complex YejABEF, which is likely involved in broad-spectrum peptide import. Responsible for the translocation of the substrate across the membrane. This chain is Peptidoglycan transport system permease protein YejE, found in Agrobacterium fabrum (strain C58 / ATCC 33970) (Agrobacterium tumefaciens (strain C58)).